Reading from the N-terminus, the 172-residue chain is Large ribosomal subunit protein uL10 (172 aa).

The protein belongs to the universal ribosomal protein uL10 family. As to quaternary structure, part of the ribosomal stalk of the 50S ribosomal subunit. The N-terminus interacts with L11 and the large rRNA to form the base of the stalk. The C-terminus forms an elongated spine to which L12 dimers bind in a sequential fashion forming a multimeric L10(L12)X complex.

Functionally, forms part of the ribosomal stalk, playing a central role in the interaction of the ribosome with GTP-bound translation factors. The protein is Large ribosomal subunit protein uL10 of Francisella tularensis subsp. holarctica (strain FTNF002-00 / FTA).